A 317-amino-acid polypeptide reads, in one-letter code: tRNA-cytidine(32) 2-sulfurtransferase (317 aa).

A disordered region spans residues 1–29; it reads MNTANNTLPTAADWAGEDGAPDAADTRKI. The short motif at 65–70 is the PP-loop motif element; the sequence is SGGKDS. Residues Cys140, Cys143, and Cys231 each contribute to the [4Fe-4S] cluster site.

This sequence belongs to the TtcA family. In terms of assembly, homodimer. It depends on Mg(2+) as a cofactor. Requires [4Fe-4S] cluster as cofactor.

The protein resides in the cytoplasm. The catalysed reaction is cytidine(32) in tRNA + S-sulfanyl-L-cysteinyl-[cysteine desulfurase] + AH2 + ATP = 2-thiocytidine(32) in tRNA + L-cysteinyl-[cysteine desulfurase] + A + AMP + diphosphate + H(+). It functions in the pathway tRNA modification. Catalyzes the ATP-dependent 2-thiolation of cytidine in position 32 of tRNA, to form 2-thiocytidine (s(2)C32). The sulfur atoms are provided by the cysteine/cysteine desulfurase (IscS) system. The protein is tRNA-cytidine(32) 2-sulfurtransferase of Acidovorax ebreus (strain TPSY) (Diaphorobacter sp. (strain TPSY)).